A 297-amino-acid polypeptide reads, in one-letter code: MRFGFLLNEVLTGFRRNVTMTIAMILTTAISVGLFGGGMLVVRLADSSRAIYLDRVESQVFLTEDVSANDSSCDTTACKALREKIETRSDVKAVRFLNRQQAYDDAIRKFPQFKDVAGKDSFPASFIVKLENPEQHKDFDTAMKGQPGVLDVLNQKELIDRLFAVLDGLSNAAFAVALVQAIGAILLIANMVQVAAYTRRTEIGIMRLVGASRWYTQLPFLVEAMLAATMGVGIAVAGLMVVRALFLENALNQFYQANLIAKVDYADILFITPWLLLLGVAMSGLTAYLTLRLYVRR.

At 1-21 (MRFGFLLNEVLTGFRRNVTMT) the chain is on the cytoplasmic side. Residues 22–42 (IAMILTTAISVGLFGGGMLVV) traverse the membrane as a helical segment. At 43–171 (RLADSSRAIY…LFAVLDGLSN (129 aa)) the chain is on the extracellular side. Residues 172–192 (AAFAVALVQAIGAILLIANMV) traverse the membrane as a helical segment. The Cytoplasmic portion of the chain corresponds to 193–219 (QVAAYTRRTEIGIMRLVGASRWYTQLP). Residues 220 to 240 (FLVEAMLAATMGVGIAVAGLM) form a helical membrane-spanning segment. At 241–267 (VVRALFLENALNQFYQANLIAKVDYAD) the chain is on the extracellular side. A helical transmembrane segment spans residues 268-288 (ILFITPWLLLLGVAMSGLTAY). Residues 289–297 (LTLRLYVRR) are Cytoplasmic-facing.

Belongs to the ABC-4 integral membrane protein family. FtsX subfamily. Forms a membrane-associated complex with FtsE.

The protein localises to the cell membrane. In terms of biological role, part of the ABC transporter FtsEX involved in cellular division. The sequence is that of Cell division protein FtsX from Mycobacterium tuberculosis (strain ATCC 25177 / H37Ra).